The sequence spans 210 residues: Large ribosomal subunit protein uL4 (210 aa).

Residues 47–64 show a composition bias toward polar residues; it reads SRQGTRSQKSRSEVSGSN. Residues 47 to 83 are disordered; the sequence is SRQGTRSQKSRSEVSGSNKKPWRQKGTGRARSGSVKS.

It belongs to the universal ribosomal protein uL4 family. As to quaternary structure, part of the 50S ribosomal subunit.

One of the primary rRNA binding proteins, this protein initially binds near the 5'-end of the 23S rRNA. It is important during the early stages of 50S assembly. It makes multiple contacts with different domains of the 23S rRNA in the assembled 50S subunit and ribosome. In terms of biological role, forms part of the polypeptide exit tunnel. This Blochmanniella pennsylvanica (strain BPEN) protein is Large ribosomal subunit protein uL4.